The sequence spans 309 residues: MSDFTAQTTTEPREYDAGFGDYFALLKPRVMSLVVFTALVGILVAPGGVSPMIGFTAILFIALGAGASGALNMWYDADIDAVMKRTAKRPVPAGKVPAGEALTLGLWLSAISVAMLGLATNWVAAGLLAFTIFFYAVVYSMWLKRATPWNIVIGGAAGSFPPMIGWAAVTGDVSLASVLMFGIIFMWTPPHFWALALFLKKDYNNAGVPMLTVTHGRTETRRQILIYTILLVPVALGLVLTEVAGPVYLITALVCNAIFLKGAYDIWKRDEAMAEADGYAVEKKVFKFSLLYLFLHFGALLLDAIWRLI.

9 helical membrane-spanning segments follow: residues 30–49, 53–75, 98–118, 123–143, 151–171, 178–198, 224–244, 247–267, and 285–305; these read VMSL…PGGV, IGFT…NMWY, AGEA…MLGL, VAAG…SMWL, IVIG…AVTG, VLMF…LALF, ILIY…TEVA, VYLI…YDIW, and VFKF…LDAI.

This sequence belongs to the UbiA prenyltransferase family. Protoheme IX farnesyltransferase subfamily. As to quaternary structure, interacts with CtaA.

It localises to the cell inner membrane. It carries out the reaction heme b + (2E,6E)-farnesyl diphosphate + H2O = Fe(II)-heme o + diphosphate. Its pathway is porphyrin-containing compound metabolism; heme O biosynthesis; heme O from protoheme: step 1/1. In terms of biological role, converts heme B (protoheme IX) to heme O by substitution of the vinyl group on carbon 2 of heme B porphyrin ring with a hydroxyethyl farnesyl side group. This is Protoheme IX farnesyltransferase from Jannaschia sp. (strain CCS1).